The following is a 406-amino-acid chain: Phosphopentomutase (406 aa).

Mn(2+)-binding residues include Asp10, Asp305, His310, Asp346, His347, and His358.

This sequence belongs to the phosphopentomutase family. Mn(2+) serves as cofactor.

The protein resides in the cytoplasm. It catalyses the reaction 2-deoxy-alpha-D-ribose 1-phosphate = 2-deoxy-D-ribose 5-phosphate. The catalysed reaction is alpha-D-ribose 1-phosphate = D-ribose 5-phosphate. Its pathway is carbohydrate degradation; 2-deoxy-D-ribose 1-phosphate degradation; D-glyceraldehyde 3-phosphate and acetaldehyde from 2-deoxy-alpha-D-ribose 1-phosphate: step 1/2. Its function is as follows. Isomerase that catalyzes the conversion of deoxy-ribose 1-phosphate (dRib-1-P) and ribose 1-phosphate (Rib-1-P) to deoxy-ribose 5-phosphate (dRib-5-P) and ribose 5-phosphate (Rib-5-P), respectively. The sequence is that of Phosphopentomutase from Vibrio parahaemolyticus serotype O3:K6 (strain RIMD 2210633).